The primary structure comprises 558 residues: MTDASVKYRPYPTINIPDRTWPGKTIDKAPIWCSVDLRDGNQSLVNPMGHDRKARMFKLLLEMGFKEIEIGFPSASQTDFDFARWCVEEGNVPDDVSLQVLVQCRPELITRTFEALEGANKPIIHFYNSTSELQRRVVFGKDVHGIKQIAVDAAKMITDMAAKAGGGFRFEYSPESFTGTELEVALEICNAVVEVVKPTADNKLILNLPSTVEMATPNIYADQIEWMCRNIDNRENVIISLHPHNDRGTGIAATELALMAGADRVEGTLFGNGERTGNVDVVTLALNMYTQGVDPELDCRDIERIKAVYEYSNEMTIPERHPYVGELVYTAFSGSHQDAINKGMKAIKVANHPVWEVPYLPIDPKDVGRSYEAIIRINSQSGKGGIAYILQQDYGINLPRNLQVEFREDIQRITDEEGVELPAKRIYERFIERYVTQPNARIKFVDHHTYPAGDFKGVRIVAAEITDNGEVKRIEGKGTGPIDGFINALSVYLGVDLSVNDYSEHSLQHGSNASAIAYVEMEHPGGKLFGAGVNTNIVAASLEAIVSAANRVLEERAK.

One can recognise a Pyruvate carboxyltransferase domain in the interval 30–303 (PIWCSVDLRD…DPELDCRDIE (274 aa)). Mg(2+)-binding residues include D39, H242, H244, and N278. The segment at 437 to 558 (QPNARIKFVD…ANRVLEERAK (122 aa)) is regulatory domain.

This sequence belongs to the alpha-IPM synthase/homocitrate synthase family. LeuA type 2 subfamily. In terms of assembly, homodimer. It depends on Mg(2+) as a cofactor.

The protein resides in the cytoplasm. It carries out the reaction 3-methyl-2-oxobutanoate + acetyl-CoA + H2O = (2S)-2-isopropylmalate + CoA + H(+). It participates in amino-acid biosynthesis; L-leucine biosynthesis; L-leucine from 3-methyl-2-oxobutanoate: step 1/4. Its function is as follows. Catalyzes the condensation of the acetyl group of acetyl-CoA with 3-methyl-2-oxobutanoate (2-ketoisovalerate) to form 3-carboxy-3-hydroxy-4-methylpentanoate (2-isopropylmalate). The sequence is that of 2-isopropylmalate synthase from Agrobacterium fabrum (strain C58 / ATCC 33970) (Agrobacterium tumefaciens (strain C58)).